A 1178-amino-acid chain; its full sequence is DNA-directed RNA polymerase subunit beta (1178 aa).

Belongs to the RNA polymerase beta chain family. As to quaternary structure, the RNAP catalytic core consists of 2 alpha, 1 beta, 1 beta' and 1 omega subunit. When a sigma factor is associated with the core the holoenzyme is formed, which can initiate transcription.

It carries out the reaction RNA(n) + a ribonucleoside 5'-triphosphate = RNA(n+1) + diphosphate. In terms of biological role, DNA-dependent RNA polymerase catalyzes the transcription of DNA into RNA using the four ribonucleoside triphosphates as substrates. The protein is DNA-directed RNA polymerase subunit beta of Treponema pallidum (strain Nichols).